The sequence spans 81 residues: Sulfur carrier protein TusA (81 aa).

The active-site Cysteine persulfide intermediate is C19.

The protein belongs to the sulfur carrier protein TusA family.

The protein localises to the cytoplasm. In terms of biological role, sulfur carrier protein which probably makes part of a sulfur-relay system. The protein is Sulfur carrier protein TusA of Shewanella frigidimarina (strain NCIMB 400).